The sequence spans 304 residues: Nod factor export ATP-binding protein I (304 aa).

Residues 6–236 (IDFRNVEKRF…EIGCDVIEIY (231 aa)) enclose the ABC transporter domain. 38–45 (GPNGAGKT) contacts ATP.

It belongs to the ABC transporter superfamily. Lipooligosaccharide exporter (TC 3.A.1.102) family. In terms of assembly, the complex is composed of two ATP-binding proteins (NodI) and two transmembrane proteins (NodJ).

It localises to the cell inner membrane. Functionally, part of the ABC transporter complex NodIJ involved in the export of the nodulation factors (Nod factors), the bacterial signal molecules that induce symbiosis and subsequent nodulation induction. Nod factors are LCO (lipo-chitin oligosaccharide), a modified beta-1,4-linked N-acetylglucosamine oligosaccharide. This subunit is responsible for energy coupling to the transport system. This Burkholderia lata (strain ATCC 17760 / DSM 23089 / LMG 22485 / NCIMB 9086 / R18194 / 383) protein is Nod factor export ATP-binding protein I.